Consider the following 224-residue polypeptide: Prolactin-3D1 (224 aa).

The first 29 residues, 1–29 (MQLTLNLSGSAGMQLLLLVSSLLLWENVS), serve as a signal peptide directing secretion. 2 disulfide bridges follow: C81–C199 and C216–C224. 2 N-linked (GlcNAc...) asparagine glycosylation sites follow: N109 and N158.

Belongs to the somatotropin/prolactin family.

The protein resides in the secreted. The protein is Prolactin-3D1 (Prl3d1) of Mus musculus (Mouse).